Reading from the N-terminus, the 60-residue chain is Cytotoxin 2 (60 aa).

4 disulfides stabilise this stretch: C3-C21, C14-C38, C42-C53, and C54-C59.

It belongs to the three-finger toxin family. Short-chain subfamily. Type IA cytotoxin sub-subfamily. In terms of assembly, monomer, or heterodimer with alpha-cobratoxin (AC P01391); disulfide-linked. Expressed by the venom gland.

Its subcellular location is the secreted. The protein localises to the target cell membrane. In terms of biological role, monomer: shows cytolytic activity. Heterodimer: has no cytolytic activity, but retains most of the alpha-cobratoxin capacity to compete with alpha-bungarotoxin for binding to Torpedo and alpha-7/CHRNA7 nicotinic acetylcholine receptors (nAChRs) as well as to Lymnea stagnalis acetylcholine-binding protein. The polypeptide is Cytotoxin 2 (Naja kaouthia (Monocled cobra)).